The sequence spans 72 residues: DNA-directed RNA polymerase subunit epsilon (72 aa).

Belongs to the RNA polymerase subunit epsilon family. RNAP is composed of a core of 2 alpha, a beta and a beta' subunit. The core is associated with a delta subunit, and at least one of epsilon or omega. When a sigma factor is associated with the core the holoenzyme is formed, which can initiate transcription.

It carries out the reaction RNA(n) + a ribonucleoside 5'-triphosphate = RNA(n+1) + diphosphate. In terms of biological role, a non-essential component of RNA polymerase (RNAP). The protein is DNA-directed RNA polymerase subunit epsilon of Levilactobacillus brevis (strain ATCC 367 / BCRC 12310 / CIP 105137 / JCM 1170 / LMG 11437 / NCIMB 947 / NCTC 947) (Lactobacillus brevis).